We begin with the raw amino-acid sequence, 369 residues long: 2-aminoethylphosphonate--pyruvate transaminase (369 aa).

Position 193 is an N6-(pyridoxal phosphate)lysine (K193).

Belongs to the class-V pyridoxal-phosphate-dependent aminotransferase family. PhnW subfamily. As to quaternary structure, homodimer. Pyridoxal 5'-phosphate is required as a cofactor.

It catalyses the reaction (2-aminoethyl)phosphonate + pyruvate = phosphonoacetaldehyde + L-alanine. In terms of biological role, involved in phosphonate degradation. The sequence is that of 2-aminoethylphosphonate--pyruvate transaminase from Burkholderia pseudomallei (strain 668).